Reading from the N-terminus, the 495-residue chain is Dihydrolipoyl dehydrogenase, mitochondrial (495 aa).

FAD-binding positions include 59–68 (EKNATLGGTC), lysine 77, and 169–171 (SGS). The cysteines at positions 68 and 73 are disulfide-linked. NAD(+) is bound by residues 206–213 (GAGVIGLE), glutamate 229, valine 264, and glycine 299. Residues aspartate 340 and 346 to 349 (MLAH) each bind FAD. Histidine 472 (proton acceptor) is an active-site residue.

It belongs to the class-I pyridine nucleotide-disulfide oxidoreductase family. The cofactor is FAD.

It localises to the mitochondrion matrix. The catalysed reaction is N(6)-[(R)-dihydrolipoyl]-L-lysyl-[protein] + NAD(+) = N(6)-[(R)-lipoyl]-L-lysyl-[protein] + NADH + H(+). The sequence is that of Dihydrolipoyl dehydrogenase, mitochondrial (dld-1) from Caenorhabditis elegans.